Here is a 682-residue protein sequence, read N- to C-terminus: Heat shock 70 kDa protein, mitochondrial (682 aa).

The transit peptide at 1-57 (MATAALLRSLRRREFATSSISAYRTLASNTKPSWCPSLVGAKWAGLARPFSSKPAGN) directs the protein to the mitochondrion. The disordered stretch occupies residues 649 to 682 (GEHMAGGSSGGASGGGGAQGGDQPPEAEYEEVKK). Residues 655-668 (GSSGGASGGGGAQG) show a composition bias toward gly residues. Residues 673-682 (PEAEYEEVKK) show a composition bias toward acidic residues.

This sequence belongs to the heat shock protein 70 family.

The protein resides in the mitochondrion. In Solanum tuberosum (Potato), this protein is Heat shock 70 kDa protein, mitochondrial (HSP68).